Consider the following 593-residue polypeptide: DNA primase (593 aa).

The segment at Cys40 to Cys64 adopts a CHC2-type zinc-finger fold. Residues Lys260–Pro342 enclose the Toprim domain. Positions 266, 310, and 312 each coordinate Mg(2+).

Belongs to the DnaG primase family. Monomer. Interacts with DnaB. The cofactor is Zn(2+). Mg(2+) serves as cofactor.

It catalyses the reaction ssDNA + n NTP = ssDNA/pppN(pN)n-1 hybrid + (n-1) diphosphate.. Its function is as follows. RNA polymerase that catalyzes the synthesis of short RNA molecules used as primers for DNA polymerase during DNA replication. This Haemophilus influenzae (strain ATCC 51907 / DSM 11121 / KW20 / Rd) protein is DNA primase.